The primary structure comprises 542 residues: Tubby-related protein 1 (542 aa).

A disordered region spans residues Met1–Asp289. Residues Phe91–Glu104 show a composition bias toward basic and acidic residues. Over residues Ala114–Ala132 the composition is skewed to acidic residues. A compositionally biased stretch (basic and acidic residues) spans Pro146–Glu157. The span at Ser262–Lys275 shows a compositional bias: basic residues.

The protein belongs to the TUB family. As to quaternary structure, homodimer. May interact with ABCF1, PSIP1, ZEB1 and HMGB2 (Potential). Interacts with DNM1. Interacts with F-actin. Interacts with TUB. Interacts with TYRO3. Retina-specific.

It is found in the cytoplasm. Its subcellular location is the cell membrane. The protein localises to the secreted. The protein resides in the synapse. In terms of biological role, required for normal development of photoreceptor synapses. Required for normal photoreceptor function and for long-term survival of photoreceptor cells. Interacts with cytoskeleton proteins and may play a role in protein transport in photoreceptor cells. Binds lipids, especially phosphatidylinositol 3-phosphate, phosphatidylinositol 4-phosphate, phosphatidylinositol 5-phosphate, phosphatidylinositol 3,4-bisphosphate, phosphatidylinositol 4,5-bisphosphate, phosphatidylinositol 3,4,5-bisphosphate, phosphatidylserine and phosphatidic acid (in vitro). Contribute to stimulation of phagocytosis of apoptotic retinal pigment epithelium (RPE) cells and macrophages. This chain is Tubby-related protein 1 (TULP1), found in Homo sapiens (Human).